The chain runs to 349 residues: tRNA pseudouridine synthase D (349 aa).

Phe27 contacts substrate. The active-site Nucleophile is the Asp80. Substrate is bound at residue Asn129. Positions 155–303 constitute a TRUD domain; sequence GVPNYFGAQR…VEAARRAMLL (149 aa). Phe329 serves as a coordination point for substrate.

The protein belongs to the pseudouridine synthase TruD family.

It catalyses the reaction uridine(13) in tRNA = pseudouridine(13) in tRNA. In terms of biological role, responsible for synthesis of pseudouridine from uracil-13 in transfer RNAs. The protein is tRNA pseudouridine synthase D of Escherichia coli (strain SE11).